The chain runs to 511 residues: 2-isopropylmalate synthase (511 aa).

Positions 5–267 constitute a Pyruvate carboxyltransferase domain; sequence LIVFDTTLRD…DTNVDISQIV (263 aa). Positions 14, 202, 204, and 238 each coordinate Mn(2+). The tract at residues 393–511 is regulatory domain; that stretch reads KLSWLKVVSE…YPVERAYPQV (119 aa).

Belongs to the alpha-IPM synthase/homocitrate synthase family. LeuA type 1 subfamily. In terms of assembly, homodimer. Requires Mn(2+) as cofactor.

The protein resides in the cytoplasm. It catalyses the reaction 3-methyl-2-oxobutanoate + acetyl-CoA + H2O = (2S)-2-isopropylmalate + CoA + H(+). The protein operates within amino-acid biosynthesis; L-leucine biosynthesis; L-leucine from 3-methyl-2-oxobutanoate: step 1/4. Functionally, catalyzes the condensation of the acetyl group of acetyl-CoA with 3-methyl-2-oxobutanoate (2-ketoisovalerate) to form 3-carboxy-3-hydroxy-4-methylpentanoate (2-isopropylmalate). The chain is 2-isopropylmalate synthase from Nitrosococcus oceani (strain ATCC 19707 / BCRC 17464 / JCM 30415 / NCIMB 11848 / C-107).